The following is a 929-amino-acid chain: Transcription initiation factor TFIID subunit 3 (929 aa).

2 disordered regions span residues 131 to 152 (IVSS…TSAE) and 176 to 197 (LGKR…RPRL). Residues S183, S199, S229, and S243 each carry the phosphoserine modification. 2 disordered regions span residues 221 to 358 (TQKI…ETIQ) and 405 to 578 (DPFE…PWKE). A compositionally biased stretch (low complexity) spans 265 to 288 (TKSFTPKTKTKTSSPGQKTKSPKT). K266 is modified (N6-acetyllysine). S291, S297, and S301 each carry phosphoserine. Composition is skewed to polar residues over residues 340 to 358 (PNRT…ETIQ) and 434 to 466 (PKAS…SWTM). Residue T501 is modified to Phosphothreonine. Over residues 504–514 (PLHKVYEEKTK) the composition is skewed to basic and acidic residues. Residues 523–537 (KKLKKELKTKMKKKE) are compositionally biased toward basic residues. Over residues 538-578 (KQRDREREKDKNKDKSKEKDKVKEKEKDKETGRETKYPWKE) the composition is skewed to basic and acidic residues. K581 is covalently cross-linked (Glycyl lysine isopeptide (Lys-Gly) (interchain with G-Cter in SUMO2)). 2 stretches are compositionally biased toward basic and acidic residues: residues 603-612 (KLKDGLVRKE) and 621-648 (KDRE…DKMK). A disordered region spans residues 603–658 (KLKDGLVRKEKEKHKDKKKDREKGKKDKDKREKEKVKDKGREDKMKAPAPPLVLPP). S667 is subject to Phosphoserine. A compositionally biased stretch (basic and acidic residues) spans 692 to 701 (EKEKVKEKEK). A disordered region spans residues 692–748 (EKEKVKEKEKKKDKKEKKKKKEKEKEKKEKEREKEKREREKREKEKEKHKHEKIKVE). Over residues 702–713 (KKDKKEKKKKKE) the composition is skewed to basic residues. Basic and acidic residues predominate over residues 714 to 737 (KEKEKKEKEREKEKREREKREKEK). K746 participates in a covalent cross-link: Glycyl lysine isopeptide (Lys-Gly) (interchain with G-Cter in SUMO2). Phosphoserine is present on S755. At K776 the chain carries N6-acetyllysine. Residues 778–787 (VPAPEAKPAP) are compositionally biased toward low complexity. The tract at residues 778–807 (VPAPEAKPAPSQNRPKTPPPAPAPAPGPML) is disordered. Residues 793–804 (KTPPPAPAPAPG) are compositionally biased toward pro residues. The PHD-type zinc finger occupies 865-915 (IWICPGCNKPDDGSPMIGCDDCDDWYHWPCVGIMTAPPEEMQWFCPKCANK). Residues C868, C871, C883, C886, H891, C894, C909, and C912 each coordinate Zn(2+).

Belongs to the TAF3 family. In terms of assembly, component of the TFIID basal transcription factor complex, composed of TATA-box-binding protein TBP, and a number of TBP-associated factors (TAFs), including TAF1, TAF2, TAF3, TAF4, TAF5, TAF6, TAF7, TAF8, TAF9, TAF10, TAF11, TAF12 and TAF13. Interacts with TAF10 via the histone fold. Interacts with TAF13, TBP, SAP130 and GCN5L2. Interacts with TBPL2.

Its subcellular location is the nucleus. The TFIID basal transcription factor complex plays a major role in the initiation of RNA polymerase II (Pol II)-dependent transcription. TFIID recognizes and binds promoters with or without a TATA box via its subunit TBP, a TATA-box-binding protein, and promotes assembly of the pre-initiation complex (PIC). The TFIID complex consists of TBP and TBP-associated factors (TAFs), including TAF1, TAF2, TAF3, TAF4, TAF5, TAF6, TAF7, TAF8, TAF9, TAF10, TAF11, TAF12 and TAF13. The TFIID complex structure can be divided into 3 modules TFIID-A, TFIID-B, and TFIID-C. TAF3 forms the TFIID-A module together with TAF5 and TBP. Required in complex with TBPL2 for the differentiation of myoblasts into myocytes. The TAF3-TBPL2 complex replaces TFIID at specific promoters at an early stage in the differentiation process. The polypeptide is Transcription initiation factor TFIID subunit 3 (TAF3) (Homo sapiens (Human)).